A 192-amino-acid polypeptide reads, in one-letter code: Phosphoheptose isomerase (192 aa).

In terms of domain architecture, SIS spans 36-192; that stretch reads CVDSLAAGGK…DQVEAVAAPA (157 aa). 51-53 lines the substrate pocket; the sequence is NGG. Zn(2+)-binding residues include H60 and E64. Substrate is bound by residues E64, 93-94, 119-121, S124, and Q171; these read ND and TTS. Zn(2+) contacts are provided by Q171 and H179.

The protein belongs to the SIS family. GmhA subfamily. In terms of assembly, homotetramer. Zn(2+) is required as a cofactor.

It localises to the cytoplasm. It carries out the reaction 2 D-sedoheptulose 7-phosphate = D-glycero-alpha-D-manno-heptose 7-phosphate + D-glycero-beta-D-manno-heptose 7-phosphate. Its pathway is carbohydrate biosynthesis; D-glycero-D-manno-heptose 7-phosphate biosynthesis; D-glycero-alpha-D-manno-heptose 7-phosphate and D-glycero-beta-D-manno-heptose 7-phosphate from sedoheptulose 7-phosphate: step 1/1. Catalyzes the isomerization of sedoheptulose 7-phosphate in D-glycero-D-manno-heptose 7-phosphate. The chain is Phosphoheptose isomerase from Paramagnetospirillum magneticum (strain ATCC 700264 / AMB-1) (Magnetospirillum magneticum).